Reading from the N-terminus, the 571-residue chain is Phosphoenolpyruvate-protein phosphotransferase (571 aa).

His189 acts as the Tele-phosphohistidine intermediate in catalysis. The phosphoenolpyruvate site is built by Arg296 and Arg332. Mg(2+)-binding residues include Glu431 and Asp455. Phosphoenolpyruvate-binding positions include 454 to 455 and Arg465; that span reads ND. Residue Cys502 is the Proton donor of the active site.

This sequence belongs to the PEP-utilizing enzyme family. As to quaternary structure, homodimer. It depends on Mg(2+) as a cofactor.

The protein resides in the cytoplasm. It carries out the reaction L-histidyl-[protein] + phosphoenolpyruvate = N(pros)-phospho-L-histidyl-[protein] + pyruvate. General (non sugar-specific) component of the phosphoenolpyruvate-dependent sugar phosphotransferase system (sugar PTS). This major carbohydrate active-transport system catalyzes the phosphorylation of incoming sugar substrates concomitantly with their translocation across the cell membrane. Enzyme I transfers the phosphoryl group from phosphoenolpyruvate (PEP) to the phosphoryl carrier protein (HPr). The protein is Phosphoenolpyruvate-protein phosphotransferase (ptsI) of Buchnera aphidicola subsp. Acyrthosiphon pisum (strain APS) (Acyrthosiphon pisum symbiotic bacterium).